The primary structure comprises 599 residues: MVLILGRRLNHENSGGVPESPAIKRKVFEMETKTLSDVFNFSSGSSHSESVLQVFNEFRDSRLFTDVIISVQGREFPCHRAVLSACSSYFRAMFCNDHRESREMVVEINGIQADAMDTFLQYVYTGRACITTLNVQFLFETSSLFQITTLRDACAKFLEEQLDPCNCLGIQRFADAHSLKQLASRCRTFALLNFPEVAQHEEFQDLRKDELEEYLASDELSICREEVVFEAVMRWVYHGVEYRRPMLKDLLQHVRLPLLHPNYFVQTVEGDKLIQNAPECYQLLHEARRYHVLGNEMMSPRTRPRRSTGFSEVIVVVGGCERMGGFNLPYTECYDPVTGEWTSLAKHPEYTKSEYAVCALRNDIILSGGRINSSYVWMYNSQLNVWIRVASLNKGRWRHKMTVLLGKVYAVGGYDGQCYLNNVEVYDSFSNRWTEVAPLKEAVCSPAVTSCAGKLFVIGGEPDENSCSNKVQCYDPESDSWQLKACLPFTKPNISAVSLNHLIYVCGGLTKSIYCYDPSQDHWMHVGHTFSRQESCGVSVCNGKIYILGGRGENGEASNNVVCYDPSSGIITSTAAMPRPVSYHGCVTVHRFSEKQHKP.

The 68-residue stretch at 65-132 (TDVIISVQGR…VYTGRACITT (68 aa)) folds into the BTB domain. The region spanning 167–269 (CLGIQRFADA…HPNYFVQTVE (103 aa)) is the BACK domain. Kelch repeat units follow at residues 313–362 (VIVV…ALRN), 364–406 (IILS…VLLG), 407–453 (KVYA…SCAG), 455–501 (LFVI…SLNH), 503–543 (IYVC…VCNG), and 545–591 (IYIL…TVHR).

Forms homodimers. Component of the BCR(KLHL24) E3 ubiquitin ligase complex.

The protein localises to the perikaryon. The protein resides in the cell projection. Its subcellular location is the axon. It is found in the cytoplasm. It localises to the cell junction. The protein localises to the desmosome. The protein resides in the adherens junction. Its function is as follows. Necessary to maintain the balance between intermediate filament stability and degradation, a process that is essential for skin integrity. Reduces kainate receptor-mediated currents in brain neurons, most probably by modulating channel properties. It is required for proper heart development. This is Kelch-like protein 24a from Danio rerio (Zebrafish).